A 349-amino-acid polypeptide reads, in one-letter code: Anthranilate phosphoribosyltransferase (349 aa).

5-phospho-alpha-D-ribose 1-diphosphate contacts are provided by residues Gly-82, 85–86 (GD), 92–95 (NVST), 110–118 (KHGNRGVSS), and Ser-122. Gly-82 serves as a coordination point for anthranilate. Residue Ser-94 coordinates Mg(2+). Asn-113 contacts anthranilate. Arg-168 lines the anthranilate pocket. 2 residues coordinate Mg(2+): Asp-227 and Glu-228.

The protein belongs to the anthranilate phosphoribosyltransferase family. In terms of assembly, homodimer. Mg(2+) serves as cofactor.

The catalysed reaction is N-(5-phospho-beta-D-ribosyl)anthranilate + diphosphate = 5-phospho-alpha-D-ribose 1-diphosphate + anthranilate. It participates in amino-acid biosynthesis; L-tryptophan biosynthesis; L-tryptophan from chorismate: step 2/5. Functionally, catalyzes the transfer of the phosphoribosyl group of 5-phosphorylribose-1-pyrophosphate (PRPP) to anthranilate to yield N-(5'-phosphoribosyl)-anthranilate (PRA). The polypeptide is Anthranilate phosphoribosyltransferase (Acinetobacter baumannii (strain SDF)).